Here is a 393-residue protein sequence, read N- to C-terminus: SEC12-like protein 2 (393 aa).

Alanine 2 carries the N-acetylalanine modification. The Cytoplasmic segment spans residues 2–367 (ANQSTETNQP…EQKGDKPGVR (366 aa)). Positions 41–67 (EKSEDDDESSSSSSSSRSCIVLSGGGG) are disordered. Serine 43 bears the Phosphoserine mark. WD repeat units follow at residues 151–190 (RDVG…TLLN), 193–231 (QAHS…AVAS), 283–322 (IKKN…TIQV), and 326–367 (AHLG…PGVR). A helical; Signal-anchor for type II membrane protein transmembrane segment spans residues 368–388 (WWLLVLLIVLLYVVAYYYMKA). At 389-393 (KGIIP) the chain is on the lumenal side.

As to quaternary structure, interacts with BZIP28.

The protein resides in the endoplasmic reticulum membrane. The protein localises to the golgi apparatus. Its subcellular location is the cis-Golgi network membrane. In terms of biological role, required for the formation or budding of transport vesicles from the ER. The sequence is that of SEC12-like protein 2 (STL2P) from Arabidopsis thaliana (Mouse-ear cress).